A 258-amino-acid polypeptide reads, in one-letter code: Acetylglutamate kinase (258 aa).

Residues 44-45, arginine 66, and asparagine 158 each bind substrate; that span reads GG. ATP-binding positions include 181 to 186 and 209 to 211; these read DVSGIL and IIT.

The protein belongs to the acetylglutamate kinase family. ArgB subfamily. In terms of assembly, homodimer.

The protein localises to the cytoplasm. It carries out the reaction N-acetyl-L-glutamate + ATP = N-acetyl-L-glutamyl 5-phosphate + ADP. It functions in the pathway amino-acid biosynthesis; L-arginine biosynthesis; N(2)-acetyl-L-ornithine from L-glutamate: step 2/4. Its function is as follows. Catalyzes the ATP-dependent phosphorylation of N-acetyl-L-glutamate. This is Acetylglutamate kinase from Salmonella paratyphi A (strain ATCC 9150 / SARB42).